Consider the following 146-residue polypeptide: Extracellular globin-2A (146 aa).

The Globin domain occupies 4–146 (HCGPLQRLKV…EVIYPGIKHD (143 aa)). Cys5 and Cys134 are oxidised to a cystine. A heme b-binding site is contributed by His97.

The protein belongs to the globin family. In terms of assembly, disulfide bonded trimer of chains IIA, IIB, and IIC.

This Tylorrhynchus heterochetus (Japanese palolo worm) protein is Extracellular globin-2A.